The following is a 150-amino-acid chain: UPF0039 protein C11D3.02c (150 aa).

The N-acetyltransferase domain maps to 9–150; that stretch reads KYFNSLDVKE…IPHVEMRLEL (142 aa).

This sequence belongs to the UPF0039 (ElaA) family.

The protein is UPF0039 protein C11D3.02c of Schizosaccharomyces pombe (strain 972 / ATCC 24843) (Fission yeast).